A 456-amino-acid chain; its full sequence is Arginine biosynthesis bifunctional protein ArgJ, mitochondrial (456 aa).

Residues T184, K213, T224, E311, N451, and T456 each coordinate substrate. T224 acts as the Nucleophile in catalysis.

Belongs to the ArgJ family. In terms of assembly, heterodimer of an alpha and a beta chain. In terms of processing, the alpha and beta chains are autoproteolytically processed from a single precursor protein within the mitochondrion.

It is found in the mitochondrion matrix. The catalysed reaction is N(2)-acetyl-L-ornithine + L-glutamate = N-acetyl-L-glutamate + L-ornithine. The enzyme catalyses L-glutamate + acetyl-CoA = N-acetyl-L-glutamate + CoA + H(+). It participates in amino-acid biosynthesis; L-arginine biosynthesis; L-ornithine and N-acetyl-L-glutamate from L-glutamate and N(2)-acetyl-L-ornithine (cyclic): step 1/1. Its pathway is amino-acid biosynthesis; L-arginine biosynthesis; N(2)-acetyl-L-ornithine from L-glutamate: step 1/4. Its function is as follows. Catalyzes two activities which are involved in the cyclic version of arginine biosynthesis: the synthesis of acetylglutamate from glutamate and acetyl-CoA, and of ornithine by transacetylation between acetylornithine and glutamate. In Aspergillus oryzae (strain ATCC 42149 / RIB 40) (Yellow koji mold), this protein is Arginine biosynthesis bifunctional protein ArgJ, mitochondrial.